Here is a 173-residue protein sequence, read N- to C-terminus: 16S rRNA aminocarboxypropyltransferase (173 aa).

S-adenosyl-L-methionine is bound by residues Thr-25, Leu-72, Leu-96, and Ser-115.

This sequence belongs to the TDD superfamily. TSR3 family.

Its subcellular location is the cytoplasm. The catalysed reaction is an N(1)-methylpseudouridine in rRNA + S-adenosyl-L-methionine = N(1)-methyl-N(3)-[(3S)-3-amino-3-carboxypropyl]pseudouridine in rRNA + S-methyl-5'-thioadenosine + H(+). In terms of biological role, aminocarboxypropyltransferase that catalyzes the aminocarboxypropyl transfer on pseudouridine corresponding to position 914 in M.jannaschii 16S rRNA. It constitutes the last step in biosynthesis of the hypermodified N1-methyl-N3-(3-amino-3-carboxypropyl) pseudouridine (m1acp3-Psi). This chain is 16S rRNA aminocarboxypropyltransferase, found in Methanococcoides burtonii (strain DSM 6242 / NBRC 107633 / OCM 468 / ACE-M).